A 205-amino-acid chain; its full sequence is Basigin (205 aa).

Positions 1 to 18 (MAAALFVLLGFALLGTHG) are cleaved as a signal peptide. The Ig-like C2-type domain occupies 19–103 (ASGAAGTVFT…MGTANIQLHG (85 aa)). Over 19–205 (ASGAAGTVFT…AIITLRVRSH (187 aa)) the chain is Extracellular. 2 disulfides stabilise this stretch: Cys41–Cys87 and Cys126–Cys185. Residues Asn44, Asn152, and Asn186 are each glycosylated (N-linked (GlcNAc...) asparagine). Residues 105–199 (PRVKAVKSSE…SKGSDQAIIT (95 aa)) form the Ig-like V-type domain.

Homooligomer. Interacts with VEGFA, KDR/VEGFR2, PPIA/CYPA, SLC16A12, SLC16A11, ATP1B2, MAG, L1CAM and AJAP1. Interacts with SLC16A1; interaction mediates SLC16A1 targeting to the plasma membrane. Interacts with SLC16A3; interaction mediates SLC16A3 targeting to the plasma membrane. Interacts with PPIL2; regulates BSG transport to the cell membrane. Interacts with XKR8; promoting its localization at the cell membrane. Interacts with SLC16A6; this interaction mediates targeting to the plasma membrane.

It localises to the cell membrane. The protein resides in the endoplasmic reticulum membrane. The protein localises to the basolateral cell membrane. Its function is as follows. Signaling receptor for cyclophilins, essential for PPIA/CYPA and PPIB/CYPB-dependent signaling related to chemotaxis and adhesion of immune cells. Plays an important role in targeting the monocarboxylate transporters SLC16A1/GLUT1, SLC16A3, SLC16A8, SLC16A11 and SLC16A12 to the plasma membrane. Acts as a coreceptor for vascular endothelial growth factor receptor 2 (KDR/VEGFR2) in endothelial cells enhancing its VEGFA-mediated activation and downstream signaling. Promotes angiogenesis through EPAS1/HIF2A-mediated up-regulation of VEGFA and KDR/VEGFR2 in endothelial cells. In Bos taurus (Bovine), this protein is Basigin (BSG).